The following is a 564-amino-acid chain: MVLYIILAIIVIILIAVGVLFYLRSNKRQIIEKAIERKNEIETLPFDQNLAQLSKLNLKGETKTKYDAMKKDNVESTNKYLAPVEEKIHNAEALLDKFSFNASQSEIDDANELMDSYEQSYQQQLEDVNEIIALYKDNDELYDKCKVDYREMKRDVLANRHQFGEAASLLETEIEKFEPRLEQYEVLKADGNYVQAHNHIAALNEQMKQLRSYMEEIPELIRETQKELPGQFQDLKYGCRDLKVEGYDLDHVKVDSTLQSLKTELSFVEPLISRLELEEANDKLANINDKLDDMYDLIEHEVKAKNDVEETKDIITDNLFKAKDMNYTLQTEIEYVRENYYINESDAQSVRQFENEIQSLISVYDDILKEMSKSAVRYSEVQDNLQYLEDHVTVINDKQEKLQNHLIQLREDEAEAEDNLLRVQSKKEEVYRRLLASNLTSVPERFIIMKNEIDHEVRDVNEQFSERPIHVKQLKDKVSKIVIQMNTFEDEANDVLVNAVYAEKLIQYGNRYRKDYSNVDKSLNEAERLFKNNRYKRAIEIAEQVLESVEPGVTKHIEEEVIKQ.

Residues 1–4 (MVLY) are Extracellular-facing. A helical membrane pass occupies residues 5 to 23 (IILAIIVIILIAVGVLFYL). Topologically, residues 24 to 564 (RSNKRQIIEK…KHIEEEVIKQ (541 aa)) are cytoplasmic. Coiled coils occupy residues 99–138 (SFNA…YKDN), 190–223 (DGNY…LIRE), 271–300 (LISR…LIEH), 350–435 (VRQF…RRLL), and 471–550 (VKQL…ESVE).

Belongs to the EzrA family.

The protein resides in the cell membrane. In terms of biological role, negative regulator of FtsZ ring formation; modulates the frequency and position of FtsZ ring formation. Inhibits FtsZ ring formation at polar sites. Interacts either with FtsZ or with one of its binding partners to promote depolymerization. The chain is Septation ring formation regulator EzrA from Staphylococcus aureus (strain Mu3 / ATCC 700698).